We begin with the raw amino-acid sequence, 156 residues long: Phosphopantetheine adenylyltransferase (156 aa).

T10 is a binding site for substrate. Residues 10 to 11 and H18 each bind ATP; that span reads TF. Substrate-binding residues include K42, L74, and R88. Residues 89–91, E99, and 124–130 contribute to the ATP site; these read GLR and NAFISSS.

It belongs to the bacterial CoaD family. Homohexamer. It depends on Mg(2+) as a cofactor.

Its subcellular location is the cytoplasm. The enzyme catalyses (R)-4'-phosphopantetheine + ATP + H(+) = 3'-dephospho-CoA + diphosphate. The protein operates within cofactor biosynthesis; coenzyme A biosynthesis; CoA from (R)-pantothenate: step 4/5. Its function is as follows. Reversibly transfers an adenylyl group from ATP to 4'-phosphopantetheine, yielding dephospho-CoA (dPCoA) and pyrophosphate. The chain is Phosphopantetheine adenylyltransferase from Campylobacter concisus (strain 13826).